The primary structure comprises 104 residues: Integration host factor subunit alpha (104 aa).

Residues G51–E70 are disordered.

It belongs to the bacterial histone-like protein family. Heterodimer of an alpha and a beta chain.

In terms of biological role, this protein is one of the two subunits of integration host factor, a specific DNA-binding protein that functions in genetic recombination as well as in transcriptional and translational control. This Ralstonia nicotianae (strain ATCC BAA-1114 / GMI1000) (Ralstonia solanacearum) protein is Integration host factor subunit alpha.